Reading from the N-terminus, the 130-residue chain is MARPTKKSGPRKQKRNVPSGVAHIQSTFNNTIVSIADPAGEVISWASAGSSGFKGAKKGTPFAAQTAAEAAARRAIDQGMRQLEVMVSGPGSGRETAIRALQSAGLEITLIRDVTPIPHNGCRPPKRRRV.

Positions 1–15 are enriched in basic residues; it reads MARPTKKSGPRKQKR. Residues 1-21 form a disordered region; that stretch reads MARPTKKSGPRKQKRNVPSGV.

Belongs to the universal ribosomal protein uS11 family. As to quaternary structure, part of the 30S ribosomal subunit. Interacts with proteins S7 and S18. Binds to IF-3.

In terms of biological role, located on the platform of the 30S subunit, it bridges several disparate RNA helices of the 16S rRNA. Forms part of the Shine-Dalgarno cleft in the 70S ribosome. This chain is Small ribosomal subunit protein uS11, found in Synechococcus elongatus (strain ATCC 33912 / PCC 7942 / FACHB-805) (Anacystis nidulans R2).